The following is a 252-amino-acid chain: Cell division protein ZapD (252 aa).

It belongs to the ZapD family. As to quaternary structure, interacts with FtsZ.

It localises to the cytoplasm. Its function is as follows. Cell division factor that enhances FtsZ-ring assembly. Directly interacts with FtsZ and promotes bundling of FtsZ protofilaments, with a reduction in FtsZ GTPase activity. The sequence is that of Cell division protein ZapD from Ralstonia nicotianae (strain ATCC BAA-1114 / GMI1000) (Ralstonia solanacearum).